We begin with the raw amino-acid sequence, 273 residues long: Pantothenate synthetase (273 aa).

An ATP-binding site is contributed by 27–34; sequence MGALHDGH. The active-site Proton donor is the H34. Q58 contacts (R)-pantoate. Q58 lines the beta-alanine pocket. 144 to 147 contacts ATP; sequence GKKD. Q150 is a binding site for (R)-pantoate. ATP contacts are provided by residues V173 and 181–184; that span reads LSSR.

The protein belongs to the pantothenate synthetase family. In terms of assembly, homodimer.

Its subcellular location is the cytoplasm. The catalysed reaction is (R)-pantoate + beta-alanine + ATP = (R)-pantothenate + AMP + diphosphate + H(+). It participates in cofactor biosynthesis; (R)-pantothenate biosynthesis; (R)-pantothenate from (R)-pantoate and beta-alanine: step 1/1. Catalyzes the condensation of pantoate with beta-alanine in an ATP-dependent reaction via a pantoyl-adenylate intermediate. The protein is Pantothenate synthetase of Campylobacter curvus (strain 525.92).